A 324-amino-acid chain; its full sequence is MKIEAVPGAPQDGEFEFVLAAEKEFEEIISISHGIYGGLDYLPSRYHSWINEKDRMVVLAKKDGTVIGLLSVFVVDGGETALLEGLRVAPWERGRGVAGVLQRFCIKLVKHRYPSVKVMRLTRDDKLSAKELTKYRVIAKQGILLLSFNAPDLASRLSSIPLPPAASRPPPPIELTPEDVRDVFLERGGLLKDLLPNQTIIQDWQPFQALPGNQDLLRRKTLCWMVDDLIQPQVATLCTAPFPVPAGPLCFYLNIDVFGSELQSVQEQLLSHLHAHVPKLPADVRCQLFLPPNLWRPMADFCTLVLGLHLEKGYTEQYLLEADI.

Residues 15-151 (FEFVLAAEKE…GILLLSFNAP (137 aa)) form the N-acetyltransferase domain.

It catalyses the reaction L-histidine + acetyl-CoA = N(alpha)-acetyl-L-histidine + CoA + H(+). In terms of biological role, enzyme responsible for the N-acetyl-histidine (NAH) synthesis, which is a major constituent of brain and lens of ectothermic vertebrates. This chain is Histidine N-acetyltransferase (hisat), found in Xenopus tropicalis (Western clawed frog).